The chain runs to 294 residues: 1D-myo-inositol 2-acetamido-2-deoxy-alpha-D-glucopyranoside deacetylase (294 aa).

Zn(2+) contacts are provided by histidine 13, aspartate 16, and histidine 148.

Belongs to the MshB deacetylase family. Zn(2+) is required as a cofactor.

The enzyme catalyses 1D-myo-inositol 2-acetamido-2-deoxy-alpha-D-glucopyranoside + H2O = 1D-myo-inositol 2-amino-2-deoxy-alpha-D-glucopyranoside + acetate. Catalyzes the deacetylation of 1D-myo-inositol 2-acetamido-2-deoxy-alpha-D-glucopyranoside (GlcNAc-Ins) in the mycothiol biosynthesis pathway. This chain is 1D-myo-inositol 2-acetamido-2-deoxy-alpha-D-glucopyranoside deacetylase, found in Geodermatophilus obscurus (strain ATCC 25078 / DSM 43160 / JCM 3152 / CCUG 61914 / KCC A-0152 / KCTC 9177 / NBRC 13315 / NRRL B-3577 / G-20).